We begin with the raw amino-acid sequence, 45 residues long: Putative UPF0377 protein YJL222W-B (45 aa).

It belongs to the UPF0377 family.

The protein is Putative UPF0377 protein YJL222W-B of Saccharomyces cerevisiae (strain ATCC 204508 / S288c) (Baker's yeast).